Consider the following 261-residue polypeptide: Small ribosomal subunit protein uS2 (261 aa).

This sequence belongs to the universal ribosomal protein uS2 family.

This is Small ribosomal subunit protein uS2 from Paracoccus denitrificans (strain Pd 1222).